Consider the following 118-residue polypeptide: Small ribosomal subunit protein uS13 (118 aa).

The disordered stretch occupies residues 94–118 (SLPVHGQRTKTNARTCKGPRKPIKK).

It belongs to the universal ribosomal protein uS13 family. Part of the 30S ribosomal subunit. Forms a loose heterodimer with protein S19. Forms two bridges to the 50S subunit in the 70S ribosome.

Functionally, located at the top of the head of the 30S subunit, it contacts several helices of the 16S rRNA. In the 70S ribosome it contacts the 23S rRNA (bridge B1a) and protein L5 of the 50S subunit (bridge B1b), connecting the 2 subunits; these bridges are implicated in subunit movement. Contacts the tRNAs in the A and P-sites. This Buchnera aphidicola subsp. Acyrthosiphon pisum (strain 5A) protein is Small ribosomal subunit protein uS13.